We begin with the raw amino-acid sequence, 108 residues long: Large ribosomal subunit protein uL24 (108 aa).

A disordered region spans residues 46-65 (RHTRVQQSSRGSQSGGIVTQ). Positions 51-61 (QQSSRGSQSGG) are enriched in low complexity.

Belongs to the universal ribosomal protein uL24 family. In terms of assembly, part of the 50S ribosomal subunit.

One of two assembly initiator proteins, it binds directly to the 5'-end of the 23S rRNA, where it nucleates assembly of the 50S subunit. Its function is as follows. One of the proteins that surrounds the polypeptide exit tunnel on the outside of the subunit. This Parafrankia sp. (strain EAN1pec) protein is Large ribosomal subunit protein uL24.